Consider the following 138-residue polypeptide: Large ribosomal subunit protein uL16 (138 aa).

Basic residues predominate over residues 1–16 (MLIPRRVKHRKQHHPS). The segment at 1–25 (MLIPRRVKHRKQHHPSRSGAAKGGT) is disordered.

The protein belongs to the universal ribosomal protein uL16 family. As to quaternary structure, part of the 50S ribosomal subunit.

Binds 23S rRNA and is also seen to make contacts with the A and possibly P site tRNAs. This Rhodococcus jostii (strain RHA1) protein is Large ribosomal subunit protein uL16.